The chain runs to 602 residues: UvrABC system protein C (602 aa).

Positions lysine 17–isoleucine 94 constitute a GIY-YIG domain. One can recognise a UVR domain in the interval serine 199–isoleucine 234.

It belongs to the UvrC family. As to quaternary structure, interacts with UvrB in an incision complex.

The protein resides in the cytoplasm. The UvrABC repair system catalyzes the recognition and processing of DNA lesions. UvrC both incises the 5' and 3' sides of the lesion. The N-terminal half is responsible for the 3' incision and the C-terminal half is responsible for the 5' incision. The protein is UvrABC system protein C of Borrelia duttonii (strain Ly).